The following is a 465-amino-acid chain: Cysteine--tRNA ligase (465 aa).

C30 contributes to the Zn(2+) binding site. Residues 32-42 carry the 'HIGH' region motif; the sequence is ITVYDYCHVGH. The Zn(2+) site is built by C214, H239, and E243. The 'KMSKS' region motif lies at 271–275; sequence KMSKS. ATP is bound at residue K274.

Belongs to the class-I aminoacyl-tRNA synthetase family. Monomer. It depends on Zn(2+) as a cofactor.

The protein resides in the cytoplasm. It carries out the reaction tRNA(Cys) + L-cysteine + ATP = L-cysteinyl-tRNA(Cys) + AMP + diphosphate. The chain is Cysteine--tRNA ligase from Burkholderia cenocepacia (strain ATCC BAA-245 / DSM 16553 / LMG 16656 / NCTC 13227 / J2315 / CF5610) (Burkholderia cepacia (strain J2315)).